We begin with the raw amino-acid sequence, 286 residues long: Beta-lactamase SHV-29 (286 aa).

The N-terminal stretch at 1 to 21 (MRYIRLCIISLLATLPLAVHA) is a signal peptide. The active-site Acyl-ester intermediate is the Ser66. A disulfide bridge connects residues Cys73 and Cys119. The active-site Proton acceptor is the Glu164. A substrate-binding site is contributed by 230–232 (KTG).

This sequence belongs to the class-A beta-lactamase family.

It catalyses the reaction a beta-lactam + H2O = a substituted beta-amino acid. This is Beta-lactamase SHV-29 (bla) from Klebsiella pneumoniae.